The sequence spans 298 residues: Riboflavin transporter (298 aa).

Helical transmembrane passes span 8 to 28 (LQGALWMLTAGLAFAIVNSVA), 35 to 55 (FGLPSTTVALVQYAIAIVVIL), 79 to 99 (VFLAVIGIQLWLWALAYPVPI), 101 to 121 (QGIALLMTSPLFATIGSGLWL), 125 to 145 (VGMARWVATLTGFIGAMIILE), 151 to 171 (FNLASLLPVGAAFFWASYSLM), 184 to 204 (MVVYLLLLITPFNLLLALPDW), 211 to 231 (TVWLLLIGAGVMTALAQWAIA), and 258 to 278 (WLVFGWVPPGRLWLGAAIIVL). EamA domains lie at 10–144 (GALW…MIIL) and 156–284 (LLPV…AFIT).

The protein belongs to the drug/metabolite transporter (DMT) superfamily. 10 TMS drug/metabolite exporter (DME) (TC 2.A.7.3) family.

It localises to the cell membrane. Its function is as follows. Transports riboflavin into the cell. In Vibrio cholerae serotype O1 (strain ATCC 39315 / El Tor Inaba N16961), this protein is Riboflavin transporter.